A 223-amino-acid chain; its full sequence is Glycerol-3-phosphate acyltransferase (223 aa).

5 helical membrane-spanning segments follow: residues 2-22 (LEIL…GLVI), 52-72 (WGVA…WLAF), 78-98 (PVFV…SCFM), 112-132 (IFLP…MLVI), and 153-173 (LAVS…AVVV). Residues 191-223 (WLKSKNKGAAAGNAAEGDDTQNMNPQDAGRKDG) are disordered.

Belongs to the PlsY family. In terms of assembly, probably interacts with PlsX.

The protein localises to the cell inner membrane. The catalysed reaction is an acyl phosphate + sn-glycerol 3-phosphate = a 1-acyl-sn-glycero-3-phosphate + phosphate. It functions in the pathway lipid metabolism; phospholipid metabolism. In terms of biological role, catalyzes the transfer of an acyl group from acyl-phosphate (acyl-PO(4)) to glycerol-3-phosphate (G3P) to form lysophosphatidic acid (LPA). This enzyme utilizes acyl-phosphate as fatty acyl donor, but not acyl-CoA or acyl-ACP. This Desulfovibrio desulfuricans (strain ATCC 27774 / DSM 6949 / MB) protein is Glycerol-3-phosphate acyltransferase.